The chain runs to 74 residues: Large ribosomal subunit protein eL38B (74 aa).

This sequence belongs to the eukaryotic ribosomal protein eL38 family. In terms of assembly, component of the large ribosomal subunit (LSU). Mature yeast ribosomes consist of a small (40S) and a large (60S) subunit. The 40S small subunit contains 1 molecule of ribosomal RNA (18S rRNA) and at least 33 different proteins. The large 60S subunit contains 3 rRNA molecules (25S, 5.8S and 5S rRNA) and at least 46 different proteins.

It localises to the cytoplasm. Functionally, component of the ribosome, a large ribonucleoprotein complex responsible for the synthesis of proteins in the cell. The small ribosomal subunit (SSU) binds messenger RNAs (mRNAs) and translates the encoded message by selecting cognate aminoacyl-transfer RNA (tRNA) molecules. The large subunit (LSU) contains the ribosomal catalytic site termed the peptidyl transferase center (PTC), which catalyzes the formation of peptide bonds, thereby polymerizing the amino acids delivered by tRNAs into a polypeptide chain. The nascent polypeptides leave the ribosome through a tunnel in the LSU and interact with protein factors that function in enzymatic processing, targeting, and the membrane insertion of nascent chains at the exit of the ribosomal tunnel. The protein is Large ribosomal subunit protein eL38B (rpl3802) of Schizosaccharomyces pombe (strain 972 / ATCC 24843) (Fission yeast).